A 795-amino-acid chain; its full sequence is Mitochondrial inner membrane m-AAA protease component paraplegin (795 aa).

The transit peptide at 1 to 43 (MAVLLLLLRALRRGPGPGPRPLWGPGPAWSPGFPARPGRGRPY) directs the protein to the mitochondrion. The propeptide at 44–105 (MASRPPGDLA…GGTFYFNTSR (62 aa)) is removed in mature form. Over 106-144 (LKQKNKEKDKSKGKAPEEDEEERRRRERDDQMYRERLRT) the chain is Mitochondrial matrix. Residues 108–133 (QKNKEKDKSKGKAPEEDEEERRRRER) are disordered. Residues 109–133 (KNKEKDKSKGKAPEEDEEERRRRER) are compositionally biased toward basic and acidic residues. A helical membrane pass occupies residues 145 to 165 (LLVIAVVMSLLNALSTSGGSI). The Mitochondrial intermembrane portion of the chain corresponds to 166 to 248 (SWNDFVHEML…DRIPVSYKRT (83 aa)). A helical membrane pass occupies residues 249–269 (GFFGNALYSVGMTAVGLAILW). The Mitochondrial matrix segment spans residues 270 to 795 (YVFRLAGMTG…LGGEEPTWPK (526 aa)). ATP is bound by residues alanine 312, glycine 352, cysteine 353, glycine 354, lysine 355, threonine 356, and leucine 357. Tyrosine 505 carries the 3'-nitrotyrosine modification. Histidine 574 is a Zn(2+) binding site. Glutamate 575 is an active-site residue. Residues histidine 578 and aspartate 650 each coordinate Zn(2+). The segment at 701–795 (HEARLLVAKA…LGGEEPTWPK (95 aa)) is interaction with PPIF. Residues 751-795 (PHGPKKMIAPQRWIDAQREKQDLGEEETEETQQPPLGGEEPTWPK) form a disordered region.

The protein in the N-terminal section; belongs to the AAA ATPase family. This sequence in the C-terminal section; belongs to the peptidase M41 family. As to quaternary structure, forms heterooligomers with AFG3L2; the m-AAA protease is composed of heterohexamers of AFG3L2 and SPG7. Component of the mitochondrial permeability transition pore complex (mPTPC), at least composed of SPG7, VDAC1 and PPIF. Interacts with MAIP1. Zn(2+) is required as a cofactor. Post-translationally, upon import into the mitochondrion, the N-terminal transit peptide is cleaved by the mitochondrial-processing peptidase (MPP) to generate an intermediate form which undergoes a second proteolytic cleavage mediated by proteases AFG3L2 removing an additional N-terminal fragment to generate the proteolytically active mature form. In terms of tissue distribution, ubiquitous.

It is found in the mitochondrion inner membrane. The catalysed reaction is ATP + H2O = ADP + phosphate + H(+). Functionally, catalytic component of the m-AAA protease, a protease that plays a key role in proteostasis of inner mitochondrial membrane proteins, and which is essential for axonal and neuron development. SPG7 possesses both ATPase and protease activities: the ATPase activity is required to unfold substrates, threading them into the internal proteolytic cavity for hydrolysis into small peptide fragments. The m-AAA protease exerts a dual role in the mitochondrial inner membrane: it mediates the processing of specific regulatory proteins and ensures protein quality control by degrading misfolded polypeptides. Mediates protein maturation of the mitochondrial ribosomal subunit MRPL32/bL32m by catalyzing the cleavage of the presequence of MRPL32/bL32m prior to assembly into the mitochondrial ribosome. Acts as a regulator of calcium in neurons by mediating degradation of SMDT1/EMRE before its assembly with the uniporter complex, limiting the availability of SMDT1/EMRE for MCU assembly and promoting efficient assembly of gatekeeper subunits with MCU. Also regulates mitochondrial calcium by catalyzing degradation of MCU. Plays a role in the formation and regulation of the mitochondrial permeability transition pore (mPTP) and its proteolytic activity is dispensable for this function. This Homo sapiens (Human) protein is Mitochondrial inner membrane m-AAA protease component paraplegin.